The primary structure comprises 340 residues: Oxygen-dependent coproporphyrinogen-III oxidase (340 aa).

Residues 1–14 show a composition bias toward polar residues; sequence MTVSPTTQPQTNHS. The disordered stretch occupies residues 1 to 22; it reads MTVSPTTQPQTNHSLPPADAKQ. A substrate-binding site is contributed by S109. H113 and H123 together coordinate a divalent metal cation. H123 (proton donor) is an active-site residue. Position 125-127 (125-127) interacts with substrate; the sequence is NYR. A divalent metal cation contacts are provided by H157 and H187. The tract at residues 278 to 313 is important for dimerization; that stretch reads YVEFNLVYDRGTIFGLQTNGRTESILMSLPPLVRWQ. 296 to 298 serves as a coordination point for substrate; that stretch reads NGR.

The protein belongs to the aerobic coproporphyrinogen-III oxidase family. As to quaternary structure, homodimer. The cofactor is a divalent metal cation.

The protein resides in the cytoplasm. The enzyme catalyses coproporphyrinogen III + O2 + 2 H(+) = protoporphyrinogen IX + 2 CO2 + 2 H2O. The protein operates within porphyrin-containing compound metabolism; protoporphyrin-IX biosynthesis; protoporphyrinogen-IX from coproporphyrinogen-III (O2 route): step 1/1. In terms of biological role, involved in the heme and chlorophyll biosynthesis. Catalyzes the aerobic oxidative decarboxylation of propionate groups of rings A and B of coproporphyrinogen-III to yield the vinyl groups in protoporphyrinogen-IX. This is Oxygen-dependent coproporphyrinogen-III oxidase from Synechocystis sp. (strain ATCC 27184 / PCC 6803 / Kazusa).